The chain runs to 200 residues: MEEVRGENEGKLEKEGKPEDEVEPEDEEKSDEDEKPDKKAKPAPRQGKPEEEAKPDEQGQDEGKPEKQGKSDGEGKRQGESKPDSQAKSASEARAAEKRPAEDYVPRKAKRKTDRGTDDSPKNSQEDLQDRHVSSEEMMRECADMTRAQEELRKRQKMGGFHWVPRDAQDALVPRGPRGVRGVRGGGGRSQRGLHDIPYL.

Over residues 1–19 the composition is skewed to basic and acidic residues; it reads MEEVRGENEGKLEKEGKPE. The tract at residues 1 to 200 is disordered; it reads MEEVRGENEG…QRGLHDIPYL (200 aa). A compositionally biased stretch (acidic residues) spans 20–34; that stretch reads DEVEPEDEEKSDEDE. Serine 30 is modified (phosphoserine). Basic and acidic residues-rich tracts occupy residues 47 to 85, 94 to 106, and 114 to 153; these read GKPE…KPDS, RAAE…DYVP, and DRGT…EELR.

It belongs to the TFS-II family. TFA subfamily.

It is found in the nucleus. In terms of biological role, may be involved in transcriptional regulation. This Mus musculus (Mouse) protein is Transcription elongation factor A protein-like 3 (Tceal3).